We begin with the raw amino-acid sequence, 138 residues long: MAGVRLVFTKAFMVTVLLTLLLNIGVKPAEGQFSACSFSSRPHPRGICGSDLADLRAFICSRRNQPAMVKRDAETGWLLPETMVKRNAQTDLDDPLRNIKLSSESALTYLTKRQRTTNLVCECCYNVCTVDVFYEYCY.

A signal peptide spans 1–31; the sequence is MAGVRLVFTKAFMVTVLLTLLLNIGVKPAEG. Gln32 carries the post-translational modification Pyrrolidone carboxylic acid. Intrachain disulfides connect Cys48/Cys124, Cys60/Cys137, and Cys123/Cys128. The propeptide at 72-84 is C-beta peptide like; sequence DAETGWLLPETMV. The propeptide at 87 to 111 is C-alpha peptide like; that stretch reads NAQTDLDDPLRNIKLSSESALTYLT. Pyrrolidone carboxylic acid is present on Gln114.

This sequence belongs to the insulin family. Heterodimer of a B chain and an A chain linked by two disulfide bonds. As to expression, expressed in the cerebral light-green cells which are giant neuroendocrines cells involved in the control of growth.

The protein resides in the cytoplasmic vesicle. The protein localises to the secretory vesicle. This Lymnaea stagnalis (Great pond snail) protein is Molluscan insulin-related peptide 5.